A 228-amino-acid polypeptide reads, in one-letter code: Ribose-5-phosphate isomerase A (228 aa).

Substrate-binding positions include 29-32, 84-87, and 97-100; these read TGST, DGAD, and KGGG. Catalysis depends on E106, which acts as the Proton acceptor. K124 serves as a coordination point for substrate.

Belongs to the ribose 5-phosphate isomerase family. As to quaternary structure, homodimer.

It carries out the reaction aldehydo-D-ribose 5-phosphate = D-ribulose 5-phosphate. It functions in the pathway carbohydrate degradation; pentose phosphate pathway; D-ribose 5-phosphate from D-ribulose 5-phosphate (non-oxidative stage): step 1/1. Its function is as follows. Catalyzes the reversible conversion of ribose-5-phosphate to ribulose 5-phosphate. The polypeptide is Ribose-5-phosphate isomerase A (Sphingopyxis alaskensis (strain DSM 13593 / LMG 18877 / RB2256) (Sphingomonas alaskensis)).